A 117-amino-acid polypeptide reads, in one-letter code: Large ribosomal subunit protein eL18 (117 aa).

Belongs to the eukaryotic ribosomal protein eL18 family.

This chain is Large ribosomal subunit protein eL18, found in Archaeoglobus fulgidus (strain ATCC 49558 / DSM 4304 / JCM 9628 / NBRC 100126 / VC-16).